The sequence spans 108 residues: uncharacterized protein (108 aa).

N-linked (GlcNAc...) asparagine glycosylation is present at N33.

In terms of processing, N-glycosylated.

This is an uncharacterized protein from Saccharomyces cerevisiae (strain ATCC 204508 / S288c) (Baker's yeast).